The sequence spans 479 residues: ATP synthase subunit beta, chloroplastic (479 aa).

156–163 is a binding site for ATP; that stretch reads GGAGVGKT.

Belongs to the ATPase alpha/beta chains family. As to quaternary structure, F-type ATPases have 2 components, CF(1) - the catalytic core - and CF(0) - the membrane proton channel. CF(1) has five subunits: alpha(3), beta(3), gamma(1), delta(1), epsilon(1). CF(0) has four main subunits: a(1), b(1), b'(1) and c(9-12).

Its subcellular location is the plastid. It is found in the chloroplast thylakoid membrane. The catalysed reaction is ATP + H2O + 4 H(+)(in) = ADP + phosphate + 5 H(+)(out). Produces ATP from ADP in the presence of a proton gradient across the membrane. The catalytic sites are hosted primarily by the beta subunits. The sequence is that of ATP synthase subunit beta, chloroplastic from Trichomanes davallioides (Kilau fern).